A 248-amino-acid polypeptide reads, in one-letter code: 2,3-bisphosphoglycerate-dependent phosphoglycerate mutase (248 aa).

Substrate is bound by residues 8–15 (RHGESTWN), 21–22 (TG), arginine 60, 87–90 (ERHY), lysine 98, 114–115 (RR), and 183–184 (GN). Histidine 9 functions as the Tele-phosphohistidine intermediate in the catalytic mechanism. Glutamate 87 acts as the Proton donor/acceptor in catalysis.

Belongs to the phosphoglycerate mutase family. BPG-dependent PGAM subfamily. As to quaternary structure, homodimer.

It catalyses the reaction (2R)-2-phosphoglycerate = (2R)-3-phosphoglycerate. Its pathway is carbohydrate degradation; glycolysis; pyruvate from D-glyceraldehyde 3-phosphate: step 3/5. Catalyzes the interconversion of 2-phosphoglycerate and 3-phosphoglycerate. In Paraburkholderia phytofirmans (strain DSM 17436 / LMG 22146 / PsJN) (Burkholderia phytofirmans), this protein is 2,3-bisphosphoglycerate-dependent phosphoglycerate mutase.